Reading from the N-terminus, the 350-residue chain is MSLKGKKITVHDMTLRDGMHPKRHQMTLEQMKSVATGLDAAGVPLIEVTHGDGLGGSSVNYGFPAHTDEEYLSTVIPLMKQAKVSALLLPGIGTVDHLKMAHELGVSTIRVATHCTEADVSEQHIAMARKMGMDTVGFLMMAHMYSAEGLVKQAKLMEGYGANCIYITDSAGYMLPDDVKERLSAVRQALKPETELGFHGHHNLAMGIANSLAAVEVGANRIDAAAAGLGAGAGNTPMEVLVAVCARMGIETGVDVFKIQDVAEDLVVPLMDFPIRIDRDALTLGYAGVYGSFLLFAKRAEAKYGIPARELLLELGRRGMVGGQEDMIEDTALTMVRERQKLGHKVAVAA.

The 253-residue stretch at 8–260 folds into the Pyruvate carboxyltransferase domain; it reads ITVHDMTLRD…ETGVDVFKIQ (253 aa). Position 16 to 17 (16 to 17) interacts with substrate; it reads RD. Asp-17 lines the Mn(2+) pocket. The Proton acceptor role is filled by His-20. The substrate site is built by Ser-170 and His-199. Mn(2+)-binding residues include His-199 and His-201. Tyr-290 provides a ligand contact to substrate.

This sequence belongs to the 4-hydroxy-2-oxovalerate aldolase family.

It catalyses the reaction (S)-4-hydroxy-2-oxopentanoate = acetaldehyde + pyruvate. In Comamonas testosteroni (Pseudomonas testosteroni), this protein is 4-hydroxy-2-oxovalerate aldolase 2 (tesG).